Here is a 126-residue protein sequence, read N- to C-terminus: Holo-[acyl-carrier-protein] synthase (126 aa).

Positions 9 and 58 each coordinate Mg(2+).

It belongs to the P-Pant transferase superfamily. AcpS family. Requires Mg(2+) as cofactor.

It localises to the cytoplasm. It carries out the reaction apo-[ACP] + CoA = holo-[ACP] + adenosine 3',5'-bisphosphate + H(+). In terms of biological role, transfers the 4'-phosphopantetheine moiety from coenzyme A to a Ser of acyl-carrier-protein. In Buchnera aphidicola subsp. Acyrthosiphon pisum (strain APS) (Acyrthosiphon pisum symbiotic bacterium), this protein is Holo-[acyl-carrier-protein] synthase.